Consider the following 267-residue polypeptide: Putative transcription factor Ovo-like 1 (267 aa).

C2H2-type zinc fingers lie at residues 118–140, 146–168, 174–197, and 213–236; these read FTCH…MKCH, HLCT…VRTH, YKCS…KKIH, and YVCE…KERH.

In terms of tissue distribution, expressed in skin, testis, kidney and weakly in lung. Not detected in heart, brain, spleen, liver and skeletal muscle.

Its subcellular location is the nucleus. Its function is as follows. Putative transcription factor. Involved in hair formation and spermatogenesis. May function in the differentiation and/or maintenance of the urogenital system. This chain is Putative transcription factor Ovo-like 1 (Ovol1), found in Mus musculus (Mouse).